Reading from the N-terminus, the 319-residue chain is Acetyl-coenzyme A carboxylase carboxyl transferase subunit alpha (319 aa).

The region spanning H38–A293 is the CoA carboxyltransferase C-terminal domain.

Belongs to the AccA family. As to quaternary structure, acetyl-CoA carboxylase is a heterohexamer composed of biotin carboxyl carrier protein (AccB), biotin carboxylase (AccC) and two subunits each of ACCase subunit alpha (AccA) and ACCase subunit beta (AccD).

The protein resides in the cytoplasm. It catalyses the reaction N(6)-carboxybiotinyl-L-lysyl-[protein] + acetyl-CoA = N(6)-biotinyl-L-lysyl-[protein] + malonyl-CoA. The protein operates within lipid metabolism; malonyl-CoA biosynthesis; malonyl-CoA from acetyl-CoA: step 1/1. Its function is as follows. Component of the acetyl coenzyme A carboxylase (ACC) complex. First, biotin carboxylase catalyzes the carboxylation of biotin on its carrier protein (BCCP) and then the CO(2) group is transferred by the carboxyltransferase to acetyl-CoA to form malonyl-CoA. The sequence is that of Acetyl-coenzyme A carboxylase carboxyl transferase subunit alpha from Stenotrophomonas maltophilia (strain K279a).